Consider the following 392-residue polypeptide: Trans-2-enoyl-CoA reductase [NADH] (392 aa).

NAD(+)-binding positions include 74 to 75 (FE), 111 to 112 (DA), and 141 to 142 (LA). A substrate-binding site is contributed by Y227. The active-site Proton donor is the Y237. NAD(+) is bound by residues K246 and 276 to 278 (VVT).

It belongs to the TER reductase family. Monomer.

The catalysed reaction is a 2,3-saturated acyl-CoA + NAD(+) = a (2E)-enoyl-CoA + NADH + H(+). Its pathway is lipid metabolism; fatty acid biosynthesis. Functionally, involved in the fatty acid synthesis (FAS II). Catalyzes the reduction of a carbon-carbon double bond in an enoyl moiety that is covalently linked to a coenzyme A (CoA). This is Trans-2-enoyl-CoA reductase [NADH] from Brachyspira hyodysenteriae (strain ATCC 49526 / WA1).